Here is a 309-residue protein sequence, read N- to C-terminus: Acetolactate synthase small subunit, mitochondrial (309 aa).

Residues 1–24 (MLRSLLQSGHRRVVASSCATMVRC) constitute a mitochondrion transit peptide. The ACT domain maps to 79-159 (VLNCLVQNEP…DYTNSEIIKR (81 aa)).

The protein belongs to the acetolactate synthase small subunit family. As to quaternary structure, the acetolactate synthase complex contains the catalytic regulatory subunit ILV2 and the regulatory small subunit ILV6.

Its subcellular location is the mitochondrion. It participates in amino-acid biosynthesis; L-isoleucine biosynthesis; L-isoleucine from 2-oxobutanoate: step 1/4. It functions in the pathway amino-acid biosynthesis; L-valine biosynthesis; L-valine from pyruvate: step 1/4. Regulatory subunit of mitochondrial acetolactate synthase, which catalyzes the first of a series of common steps in the biosynthesis of the branched-chain amino acids. Stimulates activity of the acetolactate synthase catalytic subunit ILV2 seven- to tenfold and confers sensitivity to inhibition by valine and activation by ATP. This Saccharomyces cerevisiae (strain ATCC 204508 / S288c) (Baker's yeast) protein is Acetolactate synthase small subunit, mitochondrial (ILV6).